Reading from the N-terminus, the 215-residue chain is Ribosomal RNA small subunit methyltransferase G (215 aa).

S-adenosyl-L-methionine-binding positions include Gly78, Leu83, 128-129 (AE), and Arg146.

It belongs to the methyltransferase superfamily. RNA methyltransferase RsmG family.

It localises to the cytoplasm. The catalysed reaction is guanosine(527) in 16S rRNA + S-adenosyl-L-methionine = N(7)-methylguanosine(527) in 16S rRNA + S-adenosyl-L-homocysteine. Functionally, specifically methylates the N7 position of guanine in position 527 of 16S rRNA. The chain is Ribosomal RNA small subunit methyltransferase G from Anaeromyxobacter dehalogenans (strain 2CP-1 / ATCC BAA-258).